A 249-amino-acid polypeptide reads, in one-letter code: 2,3-bisphosphoglycerate-dependent phosphoglycerate mutase (249 aa).

Residues 8-15, 21-22, arginine 60, 87-90, lysine 98, 114-115, and 183-184 each bind substrate; these read RHGESTWN, TG, ERHY, RR, and GN. Histidine 9 serves as the catalytic Tele-phosphohistidine intermediate. Glutamate 87 acts as the Proton donor/acceptor in catalysis.

Belongs to the phosphoglycerate mutase family. BPG-dependent PGAM subfamily.

The catalysed reaction is (2R)-2-phosphoglycerate = (2R)-3-phosphoglycerate. The protein operates within carbohydrate degradation; glycolysis; pyruvate from D-glyceraldehyde 3-phosphate: step 3/5. In terms of biological role, catalyzes the interconversion of 2-phosphoglycerate and 3-phosphoglycerate. This Methanoregula boonei (strain DSM 21154 / JCM 14090 / 6A8) protein is 2,3-bisphosphoglycerate-dependent phosphoglycerate mutase.